Here is a 169-residue protein sequence, read N- to C-terminus: MKYDTSELCDIYQEEVNVVEPMFSNFGGRTSFGGQIITVKCFEDNGLLYDLLEDNGHGRILLVDGGGSVRQALINAELAQLAVQNGWEGIVVYGAVRQVDQLAEFDLGIQAIAAIPAGCRDEGTGASDIRVNFGGVTFFSGDYLYADNTGIILSEEPLELDDNEEDEII.

It belongs to the RraA family. As to quaternary structure, homotrimer. Binds to both RNA-binding sites in the C-terminal region of Rne and to RhlB.

The protein localises to the cytoplasm. In terms of biological role, globally modulates RNA abundance by binding to RNase E (Rne) and regulating its endonucleolytic activity. Can modulate Rne action in a substrate-dependent manner by altering the composition of the degradosome. Modulates RNA-binding and helicase activities of the degradosome. The chain is Regulator of ribonuclease activity A from Photorhabdus laumondii subsp. laumondii (strain DSM 15139 / CIP 105565 / TT01) (Photorhabdus luminescens subsp. laumondii).